Consider the following 174-residue polypeptide: RNA pyrophosphohydrolase (174 aa).

Positions 6-150 constitute a Nudix hydrolase domain; that stretch reads GFRPNVGIVI…KREVYRRVMK (145 aa). Positions 38 to 59 match the Nudix box motif; the sequence is GGVDDGETPEQAMFRELYEEIG.

The protein belongs to the Nudix hydrolase family. RppH subfamily. A divalent metal cation is required as a cofactor.

In terms of biological role, accelerates the degradation of transcripts by removing pyrophosphate from the 5'-end of triphosphorylated RNA, leading to a more labile monophosphorylated state that can stimulate subsequent ribonuclease cleavage. The chain is RNA pyrophosphohydrolase from Tolumonas auensis (strain DSM 9187 / NBRC 110442 / TA 4).